The sequence spans 391 residues: S-adenosylmethionine synthase 5 (391 aa).

Glu9 contacts Mg(2+). His15 is an ATP binding site. Glu43 contacts K(+). The L-methionine site is built by Glu56 and Gln99. ATP contacts are provided by residues 167 to 169 (DGK), 235 to 238 (SGRF), Asp246, 252 to 253 (RK), Ala269, Lys273, and Lys277. Asp246 serves as a coordination point for L-methionine. Lys277 provides a ligand contact to L-methionine.

The protein belongs to the AdoMet synthase family. Homotetramer. Mn(2+) is required as a cofactor. Mg(2+) serves as cofactor. Requires Co(2+) as cofactor. It depends on K(+) as a cofactor.

It is found in the cytoplasm. It carries out the reaction L-methionine + ATP + H2O = S-adenosyl-L-methionine + phosphate + diphosphate. The protein operates within amino-acid biosynthesis; S-adenosyl-L-methionine biosynthesis; S-adenosyl-L-methionine from L-methionine: step 1/1. Catalyzes the formation of S-adenosylmethionine from methionine and ATP. The reaction comprises two steps that are both catalyzed by the same enzyme: formation of S-adenosylmethionine (AdoMet) and triphosphate, and subsequent hydrolysis of the triphosphate. This is S-adenosylmethionine synthase 5 (METK5) from Vitis vinifera (Grape).